Here is a 35-residue protein sequence, read N- to C-terminus: Defensin-B (35 aa).

3 disulfide bridges follow: cysteine 4–cysteine 25, cysteine 10–cysteine 33, and cysteine 14–cysteine 35.

It localises to the secreted. Has antibacterial activity against M.luteus and E.coli. The polypeptide is Defensin-B (Mytilus edulis (Blue mussel)).